Here is a 539-residue protein sequence, read N- to C-terminus: T-complex protein 1 subunit zeta (539 aa).

This sequence belongs to the TCP-1 chaperonin family. As to quaternary structure, heterooligomeric complex of about 850 to 900 kDa that forms two stacked rings, 12 to 16 nm in diameter.

It localises to the cytoplasm. Molecular chaperone; assists the folding of proteins upon ATP hydrolysis. Known to play a role, in vitro, in the folding of actin and tubulin. In Dictyostelium discoideum (Social amoeba), this protein is T-complex protein 1 subunit zeta (cct6).